A 1049-amino-acid polypeptide reads, in one-letter code: Cellulose synthase A catalytic subunit 4 [UDP-forming] (1049 aa).

Topologically, residues 1–215 (MEPNTMASFD…ISSSKISPYR (215 aa)) are cytoplasmic. Zn(2+)-binding residues include Cys-23, Cys-26, Cys-42, Cys-45, Cys-50, Cys-53, Cys-65, and Cys-68. Residues 23–69 (CKVCGDEVKDDDNGQTFVACHVCVYPVCKPCYEYERSNGNKCCPQCN) form an RING-type; degenerate zinc finger. The tract at residues 76-98 (KGSPKIAGDEENNGPDDSDDELN) is disordered. Positions 84–96 (DEENNGPDDSDDE) are enriched in acidic residues. Position 135 is a phosphoserine (Ser-135). A helical membrane pass occupies residues 216 to 236 (IVIVLRLVILVFFFRFRILTP). At 237-239 (AKD) the chain is on the extracellular side. The helical transmembrane segment at 240–260 (AYPLWLISVICEIWFALSWIL) threads the bilayer. Residues 261-831 (DQFPKWFPIN…INTIVYPFTS (571 aa)) are Cytoplasmic-facing. Positions 299, 305, 306, and 335 each coordinate UDP-alpha-D-glucose. Residue Asp-335 is part of the active site. A coiled-coil region spans residues 389–416 (VKDRRAMKREYEEFKVRINALVAKAQKK). Lys-476 contacts UDP-alpha-D-glucose. 2 residues coordinate Mn(2+): Lys-477 and Asp-501. Asp-748 is a catalytic residue. Residues 832 to 852 (IPLLAYCTIPAVCLLTGKFII) form a helical membrane-spanning segment. Over 853–857 (PTINN) the chain is Extracellular. Residues 858-878 (FASIWFLALFLSIIATAILEL) traverse the membrane as a helical segment. Residues 879–895 (RWSGVSINDLWRNEQFW) are Cytoplasmic-facing. Residues 896 to 916 (VIGGVSAHLFAVFQGLLKVLF) traverse the membrane as a helical segment. The Extracellular segment spans residues 917-945 (GVDTNFTVTSKGASDEADEFGDLYLFKWT). Residue Asn-921 is glycosylated (N-linked (GlcNAc...) asparagine). The helical transmembrane segment at 946–966 (TLLIPPTTLIILNMVGVVAGV) threads the bilayer. Topologically, residues 967–977 (SDAINNGYGSW) are cytoplasmic. Residues 978–998 (GPLFGKLFFAFWVIVHLYPFL) traverse the membrane as a helical segment. Topologically, residues 999–1007 (KGLMGRQNR) are extracellular. Residues 1008–1028 (TPTIVVLWSILLASIFSLVWV) traverse the membrane as a helical segment. The Cytoplasmic portion of the chain corresponds to 1029 to 1049 (RIDPFLPKQTGPLLKQCGVDC).

It belongs to the glycosyltransferase 2 family. Plant cellulose synthase subfamily. As to quaternary structure, interacts with CESA7 and CESA8. Assembly with CESA7 and CESA8 is required for functional complex and localization in secondary cell wall deposition sites. Interacts with STL1 and STL2, but not with GOT1. Requires Zn(2+) as cofactor. The cofactor is Mn(2+). In terms of processing, S-acylated. As to expression, confined to secondary cell wall developing tissues such as xylems and interfascicular regions. Expressed in roots, hypocotyls, leaves, inflorescences and flowers.

The protein resides in the cell membrane. It catalyses the reaction [(1-&gt;4)-beta-D-glucosyl](n) + UDP-alpha-D-glucose = [(1-&gt;4)-beta-D-glucosyl](n+1) + UDP + H(+). The protein operates within glycan metabolism; plant cellulose biosynthesis. Its function is as follows. Catalytic subunit of cellulose synthase terminal complexes ('rosettes'), required for beta-1,4-glucan microfibril crystallization, a major mechanism of the cell wall formation. Involved in the secondary cell wall formation. Required for the xylem cell wall thickening. This Arabidopsis thaliana (Mouse-ear cress) protein is Cellulose synthase A catalytic subunit 4 [UDP-forming].